A 703-amino-acid polypeptide reads, in one-letter code: Elongation factor G 2 (703 aa).

Residues 8-291 (ELYRNIGIVA…AVIDYLPAPS (284 aa)) enclose the tr-type G domain. Residues 17-24 (AHVDAGKT), 89-93 (DTPGH), and 143-146 (NKMD) contribute to the GTP site.

The protein belongs to the TRAFAC class translation factor GTPase superfamily. Classic translation factor GTPase family. EF-G/EF-2 subfamily.

It is found in the cytoplasm. In terms of biological role, catalyzes the GTP-dependent ribosomal translocation step during translation elongation. During this step, the ribosome changes from the pre-translocational (PRE) to the post-translocational (POST) state as the newly formed A-site-bound peptidyl-tRNA and P-site-bound deacylated tRNA move to the P and E sites, respectively. Catalyzes the coordinated movement of the two tRNA molecules, the mRNA and conformational changes in the ribosome. The protein is Elongation factor G 2 (fusB) of Pseudomonas putida (strain ATCC 47054 / DSM 6125 / CFBP 8728 / NCIMB 11950 / KT2440).